The following is a 177-amino-acid chain: Alkyl hydroperoxide reductase AhpD (177 aa).

The active-site Proton donor is the Cys131. An intrachain disulfide couples Cys131 to Cys134. Cys134 acts as the Cysteine sulfenic acid (-SOH) intermediate in catalysis.

Belongs to the AhpD family. Homotrimer.

It carries out the reaction N(6)-[(R)-dihydrolipoyl]-L-lysyl-[lipoyl-carrier protein] + a hydroperoxide = N(6)-[(R)-lipoyl]-L-lysyl-[lipoyl-carrier protein] + an alcohol + H2O. In terms of biological role, antioxidant protein with alkyl hydroperoxidase activity. Required for the reduction of the AhpC active site cysteine residues and for the regeneration of the AhpC enzyme activity. This Streptomyces avermitilis (strain ATCC 31267 / DSM 46492 / JCM 5070 / NBRC 14893 / NCIMB 12804 / NRRL 8165 / MA-4680) protein is Alkyl hydroperoxide reductase AhpD.